The sequence spans 908 residues: Protein translocase subunit SecA (908 aa).

ATP contacts are provided by residues Gln87, 105 to 109 (GEGKT), and Asp494. The disordered stretch occupies residues 871–908 (QEFSGGNLNRSQSNGSSVTVTTSSGGGTERKTSRRRKR). The span at 874-884 (SGGNLNRSQSN) shows a compositional bias: polar residues.

This sequence belongs to the SecA family. As to quaternary structure, monomer and homodimer. Part of the essential Sec protein translocation apparatus which comprises SecA, SecYEG and auxiliary proteins SecDF. Other proteins may also be involved.

It is found in the cell inner membrane. The protein resides in the cytoplasm. The enzyme catalyses ATP + H2O + cellular proteinSide 1 = ADP + phosphate + cellular proteinSide 2.. Its function is as follows. Part of the Sec protein translocase complex. Interacts with the SecYEG preprotein conducting channel. Has a central role in coupling the hydrolysis of ATP to the transfer of proteins into and across the cell membrane, serving as an ATP-driven molecular motor driving the stepwise translocation of polypeptide chains across the membrane. This Leptospira interrogans serogroup Icterohaemorrhagiae serovar Lai (strain 56601) protein is Protein translocase subunit SecA.